The following is a 340-amino-acid chain: Lipase chaperone (340 aa).

The chain crosses the membrane as a helical span at residues 4–24; that stretch reads ILLLIPLAFAASLAWFVWLEP. Residues 29–51 form a disordered region; the sequence is ETAPPASPQAGADRAPPAASAGE. The span at 36–51 shows a compositional bias: low complexity; the sequence is PQAGADRAPPAASAGE.

The protein belongs to the lipase chaperone family.

It is found in the cell inner membrane. May be involved in the folding of the extracellular lipase during its passage through the periplasm. The sequence is that of Lipase chaperone (lifO) from Pseudomonas aeruginosa (strain ATCC 15692 / DSM 22644 / CIP 104116 / JCM 14847 / LMG 12228 / 1C / PRS 101 / PAO1).